Reading from the N-terminus, the 815-residue chain is DNA gyrase subunit B (815 aa).

The disordered stretch occupies residues 1–21 (MEKTPATGSAVAPPPVEYGTD). The 116-residue stretch at 430–545 (SELYIVEGDS…AISTSRSRRS (116 aa)) folds into the Toprim domain. Mg(2+)-binding residues include E436, D509, and D511.

Belongs to the type II topoisomerase GyrB family. In terms of assembly, heterotetramer, composed of two GyrA and two GyrB chains. In the heterotetramer, GyrA contains the active site tyrosine that forms a transient covalent intermediate with DNA, while GyrB binds cofactors and catalyzes ATP hydrolysis. It depends on Mg(2+) as a cofactor. The cofactor is Mn(2+). Ca(2+) is required as a cofactor.

The protein resides in the cytoplasm. The catalysed reaction is ATP-dependent breakage, passage and rejoining of double-stranded DNA.. In terms of biological role, a type II topoisomerase that negatively supercoils closed circular double-stranded (ds) DNA in an ATP-dependent manner to modulate DNA topology and maintain chromosomes in an underwound state. Negative supercoiling favors strand separation, and DNA replication, transcription, recombination and repair, all of which involve strand separation. Also able to catalyze the interconversion of other topological isomers of dsDNA rings, including catenanes and knotted rings. Type II topoisomerases break and join 2 DNA strands simultaneously in an ATP-dependent manner. The polypeptide is DNA gyrase subunit B (Myxococcus xanthus).